The sequence spans 526 residues: GMP synthase [glutamine-hydrolyzing] (526 aa).

In terms of domain architecture, Glutamine amidotransferase type-1 spans 4–202; that stretch reads KILILDFGSQ…VHDICGCDQS (199 aa). Residue Cys81 is the Nucleophile of the active site. Catalysis depends on residues His176 and Glu178. The 193-residue stretch at 203 to 395 folds into the GMPS ATP-PPase domain; that stretch reads WNMPDYVETA…LGLPHDMVYR (193 aa). 230 to 236 provides a ligand contact to ATP; it reads SGGVDSS.

In terms of assembly, homodimer.

The catalysed reaction is XMP + L-glutamine + ATP + H2O = GMP + L-glutamate + AMP + diphosphate + 2 H(+). It participates in purine metabolism; GMP biosynthesis; GMP from XMP (L-Gln route): step 1/1. In terms of biological role, catalyzes the synthesis of GMP from XMP. This Methylobacillus flagellatus (strain ATCC 51484 / DSM 6875 / VKM B-1610 / KT) protein is GMP synthase [glutamine-hydrolyzing].